Consider the following 93-residue polypeptide: Large ribosomal subunit protein uL23 (93 aa).

It belongs to the universal ribosomal protein uL23 family. Part of the 50S ribosomal subunit. Contacts protein L29, and trigger factor when it is bound to the ribosome.

Functionally, one of the early assembly proteins it binds 23S rRNA. One of the proteins that surrounds the polypeptide exit tunnel on the outside of the ribosome. Forms the main docking site for trigger factor binding to the ribosome. The polypeptide is Large ribosomal subunit protein uL23 (Aliarcobacter butzleri (strain RM4018) (Arcobacter butzleri)).